We begin with the raw amino-acid sequence, 1050 residues long: Diacylglycerol kinase iota (1050 aa).

Disordered regions lie at residues 53–74, 92–111, and 328–356; these read PSSS…GSGA, AAAA…EKEE, and SLKA…ETKG. Residues 92-105 show a composition bias toward low complexity; sequence AAAAAALEEPAAAG. The segment covering 332-347 has biased composition (basic residues); that stretch reads SNRKKKRTSFKRKASK. The 136-residue stretch at 367–502 folds into the DAGKc domain; that stretch reads PLMKPLLVFV…DRWNLHVERN (136 aa). ANK repeat units lie at residues 943–972 and 979–1008; these read GHCS…AELL and TGET…SLRQ. A PDZ-binding motif is present at residues 1048–1050; that stretch reads TAV.

The protein belongs to the eukaryotic diacylglycerol kinase family. As to quaternary structure, interacts (via PDZ-binding motif) with DLG4; controls the localization of DGKI to the synapse. Interacts (via PDZ-binding motif) with DLG1. Interacts (via PDZ-binding motif) with DLG2. Interacts (via PDZ-binding motif) with DLG3. May interact with RASGRP3; involved in the regulation of RASGRP3 activity. In terms of tissue distribution, in brain, expressed in the hippocampus and cerebellum with stronger expression in the Purkinje cell layer (at protein level). Expressed in kidney.

Its subcellular location is the cell projection. The protein resides in the axon. It localises to the dendrite. The protein localises to the presynapse. It is found in the postsynapse. Its subcellular location is the postsynaptic density. The protein resides in the synaptic cell membrane. It localises to the cytoplasmic vesicle. The protein localises to the secretory vesicle. It is found in the synaptic vesicle membrane. Its subcellular location is the cytoplasm. The protein resides in the cytosol. It localises to the nucleus. It carries out the reaction a 1,2-diacyl-sn-glycerol + ATP = a 1,2-diacyl-sn-glycero-3-phosphate + ADP + H(+). The catalysed reaction is 1,2-di-(9Z-octadecenoyl)-sn-glycerol + ATP = 1,2-di-(9Z-octadecenoyl)-sn-glycero-3-phosphate + ADP + H(+). The enzyme catalyses 1-octadecanoyl-2-(5Z,8Z,11Z,14Z-eicosatetraenoyl)-sn-glycerol + ATP = 1-octadecanoyl-2-(5Z,8Z,11Z,14Z-eicosatetraenoyl)-sn-glycero-3-phosphate + ADP + H(+). It catalyses the reaction 1-octadecanoyl-2-(9Z,12Z)-octadecadienoyl-sn-glycerol + ATP = 1-octadecanoyl-2-(9Z,12Z-octadecadienoyl)-sn-glycero-3-phosphate + ADP + H(+). Its pathway is lipid metabolism; glycerolipid metabolism. Its function is as follows. Diacylglycerol kinase that converts diacylglycerol/DAG into phosphatidic acid/phosphatidate/PA and regulates the respective levels of these two bioactive lipids. Thereby, acts as a central switch between the signaling pathways activated by these second messengers with different cellular targets and opposite effects in numerous biological processes. Has probably no preference for any of the diacylglycerols in terms of the acyl chain composition, especially for the acyl chain at the sn-2 position. By controlling the diacylglycerol/DAG-mediated activation of RASGRP3, negatively regulates the Rap1 signaling pathway. May play a role in presynaptic diacylglycerol/DAG signaling and control neurotransmitter release during metabotropic glutamate receptor-dependent long-term depression. In Mus musculus (Mouse), this protein is Diacylglycerol kinase iota.